Reading from the N-terminus, the 299-residue chain is Taste receptor type 2 member 50 (299 aa).

A topological domain (extracellular) is located at residue Met1. A helical transmembrane segment spans residues 2–22 (ITFLYIFFSILIMVLFVLGNF). Over 23-55 (ANGFIALVNFIDWVKRKKISSADQILTALAVSR) the chain is Cytoplasmic. Residues 56–76 (IGLLWTLLLNWYLTVLNPAFY) traverse the membrane as a helical segment. Over 77–87 (SVELRITSYNA) the chain is Extracellular. The chain crosses the membrane as a helical span at residues 88–108 (WVVTNHFSMWLAASLSIFYLL). Over 109 to 126 (KIANFSNLIFLHLKRRVR) the chain is Cytoplasmic. The helical transmembrane segment at 127–147 (SVILVILLGTLIFLVCHLLVA) threads the bilayer. Over 148 to 181 (NMDESMWAEEYEGNITGKMKLRNTVHLSYLTVTT) the chain is Extracellular. Asn161 is a glycosylation site (N-linked (GlcNAc...) asparagine). The helical transmembrane segment at 182-202 (LWSFIPFTLSLISFLMLICSL) threads the bilayer. Over 203–229 (CKHLKKMQLHGEGSQDLSTKVHIKALQ) the chain is Cytoplasmic. A helical transmembrane segment spans residues 230–250 (TLISFLLLCAIFFLFLIISVW). At 251-259 (SPRRLRNDP) the chain is on the extracellular side. The chain crosses the membrane as a helical span at residues 260-280 (VVMVSKAVGNIYLAFDSFILI). The Cytoplasmic segment spans residues 281–299 (WRTKKLKHTFLLILCQIRC).

Belongs to the G-protein coupled receptor T2R family.

It is found in the membrane. Functionally, receptor that may play a role in the perception of bitterness and is gustducin-linked. May play a role in sensing the chemical composition of the gastrointestinal content. The activity of this receptor may stimulate alpha gustducin, mediate PLC-beta-2 activation and lead to the gating of TRPM5. In Pan paniscus (Pygmy chimpanzee), this protein is Taste receptor type 2 member 50 (TAS2R50).